The sequence spans 491 residues: Delayed-rectifier potassium channel regulatory subunit KCNS3 (491 aa).

At Met-1–Leu-182 the chain is on the cytoplasmic side. Residues Ser-183–Val-204 traverse the membrane as a helical segment. Over His-205–Pro-220 the chain is Extracellular. Residues Val-221 to Ala-243 form a helical membrane-spanning segment. At Ala-244 to Pro-254 the chain is on the cytoplasmic side. A helical transmembrane segment spans residues Leu-255–Lys-275. Topologically, residues Glu-276–Met-285 are extracellular. Residues Gly-286 to His-306 form a helical; Voltage-sensor membrane-spanning segment. The Cytoplasmic portion of the chain corresponds to Ser-307 to Tyr-321. Residues His-322–Tyr-343 traverse the membrane as a helical segment. Over Ser-344–Ile-357 the chain is Extracellular. Positions Pro-358–Thr-369 form an intramembrane region, helical. The Selectivity filter signature appears at Thr-370–Asp-375. Residues Thr-370–His-377 lie within the membrane without spanning it. At Pro-378–Lys-384 the chain is on the extracellular side. The chain crosses the membrane as a helical span at residues Leu-385 to Tyr-413. Residues Gln-414–Lys-491 are Cytoplasmic-facing.

This sequence belongs to the potassium channel family. S (TC 1.A.1.2) subfamily. Kv9.3/KCNS3 sub-subfamily. Heterotetramer with KCNB1. Does not form homomultimers.

It is found in the cell membrane. Its function is as follows. Potassium channel regulatory subunit that modulates the delayed rectifier potassium channel activity of KCNB1 by namely slowing down the deactivation and inactivation time constants. While it does not form functional channel on its own, it can form functional heterotetrameric channels with KCNB1. This Oryctolagus cuniculus (Rabbit) protein is Delayed-rectifier potassium channel regulatory subunit KCNS3.